The following is a 523-amino-acid chain: 2-isopropylmalate synthase (523 aa).

The region spanning 5-267 (VIIFDTTLRD…HTNINHHEIW (263 aa)) is the Pyruvate carboxyltransferase domain. Residues Asp14, His202, His204, and Asn238 each coordinate Mn(2+). Positions 392–523 (RLDYFSVQSG…QNKENNKETV (132 aa)) are regulatory domain.

It belongs to the alpha-IPM synthase/homocitrate synthase family. LeuA type 1 subfamily. As to quaternary structure, homodimer. Mn(2+) is required as a cofactor.

The protein localises to the cytoplasm. It carries out the reaction 3-methyl-2-oxobutanoate + acetyl-CoA + H2O = (2S)-2-isopropylmalate + CoA + H(+). Its pathway is amino-acid biosynthesis; L-leucine biosynthesis; L-leucine from 3-methyl-2-oxobutanoate: step 1/4. In terms of biological role, catalyzes the condensation of the acetyl group of acetyl-CoA with 3-methyl-2-oxobutanoate (2-ketoisovalerate) to form 3-carboxy-3-hydroxy-4-methylpentanoate (2-isopropylmalate). The protein is 2-isopropylmalate synthase of Salmonella dublin (strain CT_02021853).